The sequence spans 239 residues: Putative ankyrin repeat protein RBE_0489 (239 aa).

ANK repeat units follow at residues 23–52, 80–109, and 113–143; these read ISSRNLFKAVEKNNIAGTKFLLEHGISPNA, GIDTPLHIAANNGYTTVVKILLENGAFINA, and FGFTPLHSAIISSYKLSSIKLLLEYGTSLTL.

The sequence is that of Putative ankyrin repeat protein RBE_0489 from Rickettsia bellii (strain RML369-C).